A 424-amino-acid polypeptide reads, in one-letter code: MFS-type transporter opdF (424 aa).

A compositionally biased stretch (basic and acidic residues) spans 1 to 10 (MSDTSLEKGN). Residues 1–23 (MSDTSLEKGNEGPTAEAPKVAPP) form a disordered region. A run of 5 helical transmembrane segments spans residues 36–56 (VAGA…IALF), 102–122 (VPIA…SLST), 127–147 (LMLS…TPAM), 160–180 (IVGG…PLMV), and 187–207 (VGFG…LVFA). The N-linked (GlcNAc...) asparagine glycan is linked to Asn208. A run of 6 helical transmembrane segments spans residues 239–259 (LCVA…YIVV), 265–285 (GMST…SFFG), 299–319 (FNVM…LWLP), 329–349 (FAAL…VLIV), 364–384 (VLAF…AIAA), and 391–411 (TYTC…LAAL).

The protein belongs to the major facilitator superfamily. Monocarboxylate porter (TC 2.A.1.13) family.

The protein localises to the membrane. MFS-type transporter; part of the gene cluster that mediates the biosynthesis of oxopyrrolidines, polyketide-amino acid hybrid compounds with feature structures of tetramic acid. The protein is MFS-type transporter opdF of Penicillium oxalicum (strain 114-2 / CGMCC 5302) (Penicillium decumbens).